Consider the following 608-residue polypeptide: ATP-citrate synthase beta chain protein 1 (608 aa).

ATP is bound by residues 214–234 and 265–291; these read ILRFNNIPQIKMVVVLGELGG and FKSEVQFGHAGAKSGGEMESAQAKNQA. Residue Glu231 coordinates Mg(2+). His273 (tele-phosphohistidine intermediate) is an active-site residue. 292–302 is a binding site for CoA; that stretch reads LQDAGATVPTS.

Belongs to the succinate/malate CoA ligase alpha subunit family. In terms of assembly, heterooctamer of 4 alpha and 4 beta chains.

Its subcellular location is the cytoplasm. The protein localises to the cytosol. The enzyme catalyses oxaloacetate + acetyl-CoA + ADP + phosphate = citrate + ATP + CoA. Functionally, ATP citrate-lyase is the primary enzyme responsible for the synthesis of cytosolic acetyl-CoA, used for the elongation of fatty acids and biosynthesis of isoprenoids, flavonoids and malonated derivatives. May supply substrate to the cytosolic acetyl-CoA carboxylase, which generates the malonyl-CoA used for the synthesis of a multitude of compounds, including very long chain fatty acids and flavonoids. Required for normal growth and development and elongation of C18 fatty acids to C20 to C24 fatty acids in seeds. In contrast to all known animal ACL enzymes having a homomeric structure, plant ACLs are composed of alpha and beta chains. In Arabidopsis thaliana (Mouse-ear cress), this protein is ATP-citrate synthase beta chain protein 1 (ACLB-1).